A 354-amino-acid chain; its full sequence is Guanine nucleotide-binding protein G(i) subunit alpha-1 (354 aa).

G2 carries the N-myristoyl glycine lipid modification. C3 is lipidated: S-palmitoyl cysteine. The region spanning 32-354 is the G-alpha domain; sequence REVKLLLLGA…KNNLKDCGLF (323 aa). The segment at 35–48 is G1 motif; that stretch reads KLLLLGAGESGKST. GTP contacts are provided by residues 43-48, 150-151, and 175-178; these read ESGKST, DS, and LRTR. Residue S47 participates in Mg(2+) binding. A G2 motif region spans residues 173–181; that stretch reads DVLRTRVKT. A Mg(2+)-binding site is contributed by T181. The G3 motif stretch occupies residues 196–205; it reads FKMFDVGGQR. Residues 200 to 204, 269 to 272, and A326 each bind GTP; these read DVGGQ and NKKD. Positions 265–272 are G4 motif; sequence ILFLNKKD. A G5 motif region spans residues 324 to 329; it reads TCATDT.

This sequence belongs to the G-alpha family. G(i/o/t/z) subfamily. In terms of assembly, heterotrimeric G proteins are composed of 3 units; alpha, beta and gamma. The alpha chain contains the guanine nucleotide binding site. Part of a spindle orientation complex at least composed of GNAI1, GPSM2 and NUMA1. Identified in complex with the beta subunit GNB1 and the gamma subunit GNG1. Identified in complex with the beta subunit GNB1 and the gamma subunit GNG2. Component of the TAS2R14-GNAI1 complex, consisting of TAS2R14, GNAI1, GNB1 and GNG2; within the complex interacts with TAS2R14; this complex plays a role in the perception of bitterness. GTP binding causes dissociation of the heterotrimer, liberating the individual subunits so that they can interact with downstream effector proteins. Interacts (GDP-bound form) with GPSM1; this inhibits guanine nucleotide exchange and GTP binding. Interacts (GDP-bound form) with GPSM2 (via GoLoco domains); this inhibits guanine nucleotide exchange. Interacts with RGS10; this strongly enhances GTP hydrolysis. Interacts with RGS1 and RGS16; this strongly enhances GTPase activity. Interacts with RGS4. Interacts with RGS12. Interacts (via active GTP- or inactive GDP-bound forms) with RGS14 (via RGS and GoLoco domains). Interacts with RGS3, RGS6, RGS7, RGS8, RGS17, RGS18 and RGS20 (in vitro). Interacts (GDP-bound form) with RIC8A (via C-terminus); promoting GNAI1 folding and association with the plasma membrane. Interacts (inactive GDP-bound form) with NUCB1 (via GBA motif); the interaction leads to activation of GNAI1. Interacts (inactive GDP-bound form) with CCDC88C/DAPLE (via GBA motif); the interaction leads to activation of GNAI1. Interacts (inactive GDP-bound form) with CCDC8A/GIV (via GBA motif). Post-translationally, myristoylation at Gly-2 is required for membrane anchoring before palmitoylation. Palmitoylation at Cys-3 varies with membrane lipid composition. Mainly expressed in the brain, lung and kidney.

The protein resides in the nucleus. It is found in the cytoplasm. It localises to the cell membrane. The protein localises to the cytoskeleton. Its subcellular location is the microtubule organizing center. The protein resides in the centrosome. It is found in the cell cortex. It localises to the membrane. The catalysed reaction is GTP + H2O = GDP + phosphate + H(+). Its function is as follows. Guanine nucleotide-binding proteins (G proteins) function as transducers downstream of G protein-coupled receptors (GPCRs) in numerous signaling cascades. The alpha chain contains the guanine nucleotide binding site and alternates between an active, GTP-bound state and an inactive, GDP-bound state. Signaling by an activated GPCR promotes GDP release and GTP binding. The alpha subunit has a low GTPase activity that converts bound GTP to GDP, thereby terminating the signal. Both GDP release and GTP hydrolysis are modulated by numerous regulatory proteins. Signaling is mediated via effector proteins, such as adenylate cyclase. Inhibits adenylate cyclase activity of ADCY1, ADCY5 and ADCY6, leading to decreased intracellular cAMP levels. The inactive GDP-bound form prevents the association of RGS14 with centrosomes and is required for the translocation of RGS14 from the cytoplasm to the plasma membrane. Required for normal cytokinesis during mitosis. Required for cortical dynein-dynactin complex recruitment during metaphase. The polypeptide is Guanine nucleotide-binding protein G(i) subunit alpha-1 (GNAI1) (Cavia porcellus (Guinea pig)).